A 518-amino-acid polypeptide reads, in one-letter code: Glutamate--cysteine ligase (518 aa).

The protein belongs to the glutamate--cysteine ligase type 1 family. Type 1 subfamily.

It catalyses the reaction L-cysteine + L-glutamate + ATP = gamma-L-glutamyl-L-cysteine + ADP + phosphate + H(+). It participates in sulfur metabolism; glutathione biosynthesis; glutathione from L-cysteine and L-glutamate: step 1/2. This is Glutamate--cysteine ligase from Escherichia coli O139:H28 (strain E24377A / ETEC).